We begin with the raw amino-acid sequence, 409 residues long: 2,3-bisphosphoglycerate-independent phosphoglycerate mutase 1 (409 aa).

The span at 163-173 (SDADPKVEGKP) shows a compositional bias: basic and acidic residues. The disordered stretch occupies residues 163–184 (SDADPKVEGKPPKKIKALDGSP).

The protein belongs to the BPG-independent phosphoglycerate mutase family. A-PGAM subfamily.

It catalyses the reaction (2R)-2-phosphoglycerate = (2R)-3-phosphoglycerate. It functions in the pathway carbohydrate degradation; glycolysis; pyruvate from D-glyceraldehyde 3-phosphate: step 3/5. Functionally, catalyzes the interconversion of 2-phosphoglycerate and 3-phosphoglycerate. This chain is 2,3-bisphosphoglycerate-independent phosphoglycerate mutase 1 (apgM1), found in Methanothermobacter thermautotrophicus (strain ATCC 29096 / DSM 1053 / JCM 10044 / NBRC 100330 / Delta H) (Methanobacterium thermoautotrophicum).